The chain runs to 163 residues: Protein FixC (163 aa).

The protein belongs to the ETF-QO/FixC family. FAD is required as a cofactor.

Its function is as follows. Could be required for the formation of a functional nitrogenase Fe protein. Probably accepts electrons from FixA/FixB and reduces a quinone. The chain is Protein FixC (fixC) from Rhizobium leguminosarum.